The primary structure comprises 318 residues: L-lactate dehydrogenase (318 aa).

NAD(+) is bound by residues valine 18, aspartate 39, lysine 44, tyrosine 69, and 83–84; that span reads GA. Residues glutamine 86 and arginine 92 each contribute to the substrate site. Residues serine 105, 122-124, and serine 147 each bind NAD(+); that span reads VSN. 124 to 127 is a binding site for substrate; that stretch reads NPVD. 152-155 contributes to the substrate binding site; the sequence is DTSR. Catalysis depends on histidine 179, which acts as the Proton acceptor. The residue at position 225 (tyrosine 225) is a Phosphotyrosine. Residue threonine 234 participates in substrate binding.

This sequence belongs to the LDH/MDH superfamily. LDH family. In terms of assembly, homotetramer.

It localises to the cytoplasm. The catalysed reaction is (S)-lactate + NAD(+) = pyruvate + NADH + H(+). The protein operates within fermentation; pyruvate fermentation to lactate; (S)-lactate from pyruvate: step 1/1. Its function is as follows. Catalyzes the conversion of lactate to pyruvate. The polypeptide is L-lactate dehydrogenase (Clostridium botulinum (strain Kyoto / Type A2)).